Reading from the N-terminus, the 510-residue chain is Nectin-4 (510 aa).

A signal peptide spans 1–31; the sequence is MPLSLGAEMWGPEAWLLLLLLLASFTGRCPA. In terms of domain architecture, Ig-like V-type spans 32–144; that stretch reads GELETSDVVT…GSFQARLRLR (113 aa). Topologically, residues 32-349 are extracellular; sequence GELETSDVVT…GKQVDLVSAS (318 aa). Intrachain disulfides connect C52–C127, C171–C223, and C270–C315. 2 Ig-like C2-type domains span residues 148 to 237 and 248 to 331; these read PPLP…QRIT and ASVR…VTVD. Residue N281 is glycosylated (N-linked (GlcNAc...) asparagine). A helical membrane pass occupies residues 350 to 370; sequence VVVVGVIAALLFCLLVVVVVL. Topologically, residues 371 to 510 are cytoplasmic; it reads MSRYHRRKAQ…IYINGRGHLV (140 aa). The segment covering 399–412 has biased composition (basic and acidic residues); the sequence is RRLHSHHTDPRSQP. 2 disordered regions span residues 399–447 and 457–476; these read RRLH…SYST and QTELLSPGSGRAEEEEDQDE.

Belongs to the nectin family. Self-associates. Interacts via its Ig-like V-type domain with NECTIN1 Ig-like V-type domain. Interacts via its C-terminus with AFDN. As to quaternary structure, (Microbial infection) Interacts (via N-terminus) with measles virus hemagglutinin protein. Post-translationally, the soluble form is produced by proteolytic cleavage at the cell surface (shedding), probably by ADAM17/TACE. Predominantly expressed in placenta. Not detected in normal breast epithelium but expressed in breast carcinoma.

The protein resides in the cell membrane. It localises to the cell junction. The protein localises to the adherens junction. It is found in the secreted. In terms of biological role, seems to be involved in cell adhesion through trans-homophilic and -heterophilic interactions, the latter including specifically interactions with NECTIN1. Does not act as receptor for alpha-herpesvirus entry into cells. Functionally, (Microbial infection) Acts as a receptor for measles virus. The sequence is that of Nectin-4 from Homo sapiens (Human).